The following is a 627-amino-acid chain: tRNA uridine 5-carboxymethylaminomethyl modification enzyme MnmG (627 aa).

FAD-binding positions include 13–18 (GGGHAG), Val125, and Ser180. Position 274-288 (274-288 (GPRYCPSIEDKVVRF)) interacts with NAD(+). Gln371 serves as a coordination point for FAD.

Belongs to the MnmG family. As to quaternary structure, homodimer. Heterotetramer of two MnmE and two MnmG subunits. FAD is required as a cofactor.

The protein resides in the cytoplasm. In terms of biological role, NAD-binding protein involved in the addition of a carboxymethylaminomethyl (cmnm) group at the wobble position (U34) of certain tRNAs, forming tRNA-cmnm(5)s(2)U34. The sequence is that of tRNA uridine 5-carboxymethylaminomethyl modification enzyme MnmG from Francisella philomiragia subsp. philomiragia (strain ATCC 25017 / CCUG 19701 / FSC 153 / O#319-036).